Consider the following 721-residue polypeptide: Ribonuclease R (721 aa).

Residues 249–587 (RRSIIDREII…VHRLLWMFIF (339 aa)) form the RNB domain. An S1 motif domain is found at 639–719 (GKEFIGVVTT…LTRKIDFELV (81 aa)).

Belongs to the RNR ribonuclease family. RNase R subfamily.

The protein localises to the cytoplasm. It catalyses the reaction Exonucleolytic cleavage in the 3'- to 5'-direction to yield nucleoside 5'-phosphates.. Its function is as follows. 3'-5' exoribonuclease that releases 5'-nucleoside monophosphates and is involved in maturation of structured RNAs. The sequence is that of Ribonuclease R from Ureaplasma parvum serovar 3 (strain ATCC 700970).